Here is an 834-residue protein sequence, read N- to C-terminus: Leucine--tRNA ligase (834 aa).

The short motif at 40–50 (PYPSGNIHMGH) is the 'HIGH' region element. Positions 586-590 (KMSKS) match the 'KMSKS' region motif. K589 is an ATP binding site.

It belongs to the class-I aminoacyl-tRNA synthetase family.

It is found in the cytoplasm. It catalyses the reaction tRNA(Leu) + L-leucine + ATP = L-leucyl-tRNA(Leu) + AMP + diphosphate. This Nitratidesulfovibrio vulgaris (strain DSM 19637 / Miyazaki F) (Desulfovibrio vulgaris) protein is Leucine--tRNA ligase.